A 276-amino-acid polypeptide reads, in one-letter code: O-methyltransferase cnsE (276 aa).

S-adenosyl-L-methionine contacts are provided by residues glutamine 110, 133–134, and histidine 155; that span reads DA.

The protein belongs to the methyltransferase superfamily. S-adenosyl-L-methionine serves as cofactor.

Its pathway is alkaloid biosynthesis. In terms of biological role, O-methyltransferase; part of the gene cluster that mediates the biosynthesis of communesins, a prominent class of indole alkaloids with great potential as pharmaceuticals. Communesins are biosynthesized by the coupling of tryptamine and aurantioclavine, two building blocks derived from L-tryptophan. The L-tryptophan decarboxylase cnsB converts L-tryptophan to tryptamine, whereas the tryptophan dimethylallyltransferase cnsF converts L-tryptophan to 4-dimethylallyl tryptophan which is further transformed to aurantioclavine by the aurantioclavine synthase cnsA, probably aided by the catalase cnsD. The cytochrome P450 monooxygenase cnsC catalyzes the heterodimeric coupling between the two different indole moieties, tryptamine and aurantioclavine, to construct vicinal quaternary stereocenters and yield the heptacyclic communesin scaffold. The O-methyltransferase cnsE then methylates the communesin scaffold to produce communesin K, the simplest characterized communesin that contains the heptacyclic core. The dioxygenase cnsJ converts communesin K into communesin I. Acylation to introduce the hexadienyl group at position N16 of communesin I by the acyltransferase cnsK leads to the production of communesin B. The hexadienyl group is produced by the highly reducing polyketide synthase cnsI, before being hydrolytically removed from cnsI by the serine hydrolase cnsH, converted into hexadienyl-CoA by the CoA ligase cnsG, and then transferred to communesin I by cnsK. Surprisingly, cnsK may also be a promiscuous acyltransferase that can tolerate a range of acyl groups, including acetyl-, propionyl-, and butyryl-CoA, which lead to communesins A, G and H respectively. The roles of the alpha-ketoglutarate-dependent dioxygenases cnsM and cnsP have still to be determined. The chain is O-methyltransferase cnsE from Penicillium expansum (Blue mold rot fungus).